Consider the following 140-residue polypeptide: 3-hydroxyacyl-[acyl-carrier-protein] dehydratase FabZ (140 aa).

His47 is an active-site residue.

The protein belongs to the thioester dehydratase family. FabZ subfamily.

The protein resides in the cytoplasm. It catalyses the reaction a (3R)-hydroxyacyl-[ACP] = a (2E)-enoyl-[ACP] + H2O. Its function is as follows. Involved in unsaturated fatty acids biosynthesis. Catalyzes the dehydration of short chain beta-hydroxyacyl-ACPs and long chain saturated and unsaturated beta-hydroxyacyl-ACPs. This chain is 3-hydroxyacyl-[acyl-carrier-protein] dehydratase FabZ, found in Streptococcus pyogenes serotype M49 (strain NZ131).